Reading from the N-terminus, the 281-residue chain is uncharacterized protein (281 aa).

Helical transmembrane passes span 8–28 (ALPVVAIVALVASGVIMFIWS), 97–117 (LAVALHGLGLSVLLFDYRGYG), 147–167 (PARIAYFGESLGAAVAVGLAV), and 210–230 (IASVHAPVLVIAGGSDDIVPA).

It to S.pombe bem46 and yeast YNL320w.

The protein localises to the cell membrane. This is an uncharacterized protein from Mycobacterium tuberculosis (strain ATCC 25618 / H37Rv).